A 423-amino-acid chain; its full sequence is Gamma-glutamyl phosphate reductase (423 aa).

The protein belongs to the gamma-glutamyl phosphate reductase family.

Its subcellular location is the cytoplasm. It catalyses the reaction L-glutamate 5-semialdehyde + phosphate + NADP(+) = L-glutamyl 5-phosphate + NADPH + H(+). Its pathway is amino-acid biosynthesis; L-proline biosynthesis; L-glutamate 5-semialdehyde from L-glutamate: step 2/2. Functionally, catalyzes the NADPH-dependent reduction of L-glutamate 5-phosphate into L-glutamate 5-semialdehyde and phosphate. The product spontaneously undergoes cyclization to form 1-pyrroline-5-carboxylate. This chain is Gamma-glutamyl phosphate reductase, found in Pseudomonas entomophila (strain L48).